Here is a 171-residue protein sequence, read N- to C-terminus: MAGGSTNTKKIEMSLAEELVPKSQEPSREQVLIAEMLEHGIRSLGASQSRQKLDSKISDSAAAWNLAANKSKKTGPQLPPKKASQEPNQEGGFQGMGFLYERNLGADVIAEIGLEELNGLEMEIMRRQLQVITGRLRALEDQGATWRHRETLFFTMLVSVCVANLWLWLRQ.

Disordered regions lie at residues 1–27 (MAGG…QEPS) and 68–92 (ANKS…QEGG). The chain crosses the membrane as a helical span at residues 151–169 (TLFFTMLVSVCVANLWLWL).

Interacts with BIK and RNF183. Interacts with IMMT/MIC60and EMD.

Its subcellular location is the mitochondrion. The protein localises to the mitochondrion outer membrane. The protein resides in the endoplasmic reticulum membrane. In terms of biological role, involved in the regulation of endoplasmic reticulum (ER)-mitochondria coupling. Negatively regulates the ER-mitochondria distance and Ca(2+) transfer from ER to mitochondria possibly implicating it in the regulation of apoptosis. May collaborate with RNF183 to restrain BIK protein levels thus regulating apoptotic signaling. This Sus scrofa (Pig) protein is Fetal and adult testis-expressed transcript protein homolog (FATE1).